Here is a 154-residue protein sequence, read N- to C-terminus: Egg-lysin (154 aa).

The signal sequence occupies residues 1 to 18; the sequence is MKLFVLCIFAMMATLAMS.

Homodimer. As to expression, sperm.

Functionally, dissolves the egg vitelline layer nonenzymatically during fertilization. It creates a hole of about 3 mu-m in diameter through which the sperm pass. The polypeptide is Egg-lysin (Haliotis kamtschatkana (Pinto abalone)).